Consider the following 444-residue polypeptide: ATP-dependent 6-phosphofructokinase 2 (444 aa).

A Phosphoserine modification is found at S55. Residues G86, 149–150 (RG), and 174–177 (GDGT) each bind ATP. Residue D175 participates in Mg(2+) binding. Residues 203-205 (TVD), 248-250 (MGR), E304, and 362-365 (YMIR) each bind substrate. D205 functions as the Proton acceptor in the catalytic mechanism.

It belongs to the phosphofructokinase type A (PFKA) family. PPi-dependent PFK group II subfamily. Atypical ATP-dependent clade 'X' sub-subfamily. Homotetramer. The cofactor is Mg(2+). As to expression, mostly expressed in roots and stems.

It localises to the cytoplasm. The enzyme catalyses beta-D-fructose 6-phosphate + ATP = beta-D-fructose 1,6-bisphosphate + ADP + H(+). Its pathway is carbohydrate degradation; glycolysis; D-glyceraldehyde 3-phosphate and glycerone phosphate from D-glucose: step 3/4. With respect to regulation, allosterically activated by AMP. Functionally, catalyzes the phosphorylation of D-fructose 6-phosphate to fructose 1,6-bisphosphate by ATP, the first committing step of glycolysis. This Arabidopsis thaliana (Mouse-ear cress) protein is ATP-dependent 6-phosphofructokinase 2.